The chain runs to 329 residues: UDP-2,3-diacylglucosamine pyrophosphatase LpxG (329 aa).

Residues 2–24 form a helical membrane-spanning segment; the sequence is FVFVGSTVSLTAIVAAPVLTWIW. Residues D59, H61, D91, N123, H257, and H259 each coordinate a divalent metal cation.

Belongs to the metallophosphoesterase superfamily. Requires Mn(2+) as cofactor.

The protein localises to the cell inner membrane. The catalysed reaction is UDP-2,3-diacyl-alpha-D-glucosamine + H2O = 2,3-diacyl-alpha-D-glucosaminyl 1-phosphate + UMP + 2 H(+). Its pathway is glycolipid biosynthesis; lipid IV(A) biosynthesis. Hydrolyzes the pyrophosphate bond of UDP-2,3-diacylglucosamine to form 2,3-diacylglucosamine 1-phosphate (lipid X) and UMP by catalyzing the attack of water at the alpha-P atom. Involved in the biosynthesis of lipid A, a phosphorylated glycolipid that anchors the lipooligosaccharide (LOS) to the outer membrane of the cell. The sequence is that of UDP-2,3-diacylglucosamine pyrophosphatase LpxG from Chlamydia muridarum (strain MoPn / Nigg).